A 390-amino-acid polypeptide reads, in one-letter code: Queuine tRNA-ribosyltransferase (390 aa).

Catalysis depends on D90, which acts as the Proton acceptor. Substrate is bound by residues 90–94 (DSGGF), D144, Q197, and G224. The RNA binding stretch occupies residues 255–261 (GVGTPED). The active-site Nucleophile is D274. The RNA binding; important for wobble base 34 recognition stretch occupies residues 279–283 (TRNAR). Positions 312, 314, 317, and 354 each coordinate Zn(2+).

This sequence belongs to the queuine tRNA-ribosyltransferase family. As to quaternary structure, homodimer. Within each dimer, one monomer is responsible for RNA recognition and catalysis, while the other monomer binds to the replacement base PreQ1. Requires Zn(2+) as cofactor.

The enzyme catalyses 7-aminomethyl-7-carbaguanine + guanosine(34) in tRNA = 7-aminomethyl-7-carbaguanosine(34) in tRNA + guanine. It functions in the pathway tRNA modification; tRNA-queuosine biosynthesis. Catalyzes the base-exchange of a guanine (G) residue with the queuine precursor 7-aminomethyl-7-deazaguanine (PreQ1) at position 34 (anticodon wobble position) in tRNAs with GU(N) anticodons (tRNA-Asp, -Asn, -His and -Tyr). Catalysis occurs through a double-displacement mechanism. The nucleophile active site attacks the C1' of nucleotide 34 to detach the guanine base from the RNA, forming a covalent enzyme-RNA intermediate. The proton acceptor active site deprotonates the incoming PreQ1, allowing a nucleophilic attack on the C1' of the ribose to form the product. After dissociation, two additional enzymatic reactions on the tRNA convert PreQ1 to queuine (Q), resulting in the hypermodified nucleoside queuosine (7-(((4,5-cis-dihydroxy-2-cyclopenten-1-yl)amino)methyl)-7-deazaguanosine). The sequence is that of Queuine tRNA-ribosyltransferase from Leptothrix cholodnii (strain ATCC 51168 / LMG 8142 / SP-6) (Leptothrix discophora (strain SP-6)).